A 918-amino-acid chain; its full sequence is MDYKQTLLMPKTAFPMRGNLPNKEPERQKKWEETNQYAKTLERTKGRPLFVLHDGPPYANGDIHIGHALNKVLKDFIVRYKSMTGYHAPYIPGWDTHGLPIETALTKKKKIKRKEMDIAAFRKLCEEYALGQINNQREQFKQLGVRGDWDNPYITLTKDYEASQIKVFGDMARKGYIYKGLKPVYWSPSSESALAEAEIEYQDKRSPSIYVAFEVKGGQALLSGGEKFIIWTTTPWTLPANLGISLHADLTYIVVQVGEEKYIIAEALFDDVSESLGWENPQVLQSFKGKEAEGIEAQHPFYDRTSLVMLGEHVTTDAGTGCVHTAPGHGEDDFYVSRSYGIDAFCPVDEKGVFTQEAPGFEGLFYDEANKIITEKLDASGALLKLEFITHSYPHDWRTKKPTIFRATSQWFASIKDFRVDILEEIKQVNWYPHWGETRLYNMVRDREDWCISRQRAWGVPIPVFYGEDGTPIITDETINHVSELFREHGSNIWFEKEAKELLPEGFTSEHSPNGNFAKETDIMDVWFDSGSSHEGVLLNRQNHQRPANVYLEGSDQYRGWFNSSLSTSVAVTGKAPYKAVISHGFVLDGNGRKMSKSLGNVIVPSKVQKQLGSDILRLWVSSVDYQADVRISDDILKQTSESYRKIRNTFRFLLANLADFNPNTDRVKEENMEEVDRYMVHRLQNVLAEAHKNYNQYEFAPVFQQIHHFCSVDLSSFYLDFAKDILYIEAKDHPRRRSIQTGYYEVLTSLVKLIAPIIPHTAEEVWEYIPEPEAESVHLTDIPEARDVAINEQTVDKWNHFMKIRDDVLKALEEARSEKVIGKSLEAKISIAAKDEGTKKVLDEMEHLHQYFIVSEAVIVDTLTDAKEGNVVNVQVEVHPGETCDRCWVSSETVGENKNHPSLCSRCADVVTKHYAD.

The short motif at 57-67 (PYANGDIHIGH) is the 'HIGH' region element. E553 serves as a coordination point for L-isoleucyl-5'-AMP. The 'KMSKS' region signature appears at 594 to 598 (KMSKS). K597 is an ATP binding site. Zn(2+)-binding residues include C885, C888, C905, and C908.

It belongs to the class-I aminoacyl-tRNA synthetase family. IleS type 1 subfamily. In terms of assembly, monomer. Requires Zn(2+) as cofactor.

Its subcellular location is the cytoplasm. It catalyses the reaction tRNA(Ile) + L-isoleucine + ATP = L-isoleucyl-tRNA(Ile) + AMP + diphosphate. In terms of biological role, catalyzes the attachment of isoleucine to tRNA(Ile). As IleRS can inadvertently accommodate and process structurally similar amino acids such as valine, to avoid such errors it has two additional distinct tRNA(Ile)-dependent editing activities. One activity is designated as 'pretransfer' editing and involves the hydrolysis of activated Val-AMP. The other activity is designated 'posttransfer' editing and involves deacylation of mischarged Val-tRNA(Ile). The sequence is that of Isoleucine--tRNA ligase 1 from Oceanobacillus iheyensis (strain DSM 14371 / CIP 107618 / JCM 11309 / KCTC 3954 / HTE831).